The primary structure comprises 402 residues: Protein FixF (402 aa).

The polypeptide is Protein FixF (fixF) (Sinorhizobium fredii (strain NBRC 101917 / NGR234)).